Consider the following 626-residue polypeptide: MVVQHNQPGSTDQSVIRNFCIIAHIDHGKSTVADRILQLSGIVPEREMRDRFLDRMDIEQERGITIKSQAVRVPWTFEGTEYTLGMIDTPGHVDFTYEVSRALAACEGAVLLVDATQGIEAQTLSNLYMAIDHDLAIIPVLNKIDLPSAEPDKHAEEIAGLIGCEPSDVLRVSGKTGEGVADLLDQIVMDVPAPHGDPDAPARALIFDSVYDSYRGIVTYIRMEDGELHDREKVHMMGIGMTHDPIEIGVISPDMTRTKALGAGEVGYIITGAKDVSQSKVGDTLTSAVRPATEPLPGYRDPKPMVYAGLFPIDNAQFPELRDALDKLKLNDAALIYTPETSVALGFGFRCGFLGLLHMEIVNERLSREFGLDLIQTAPNVTYDVTAEDGSQHHVTNPSEFPDGKIKKIVEPMVAADIITPKEFIGAVMDLCQDHRGIMGTMEYISTDRVEMHYRIPLAEIVFDFFDQLKSRTKGYASLDYHEDGEQSADLVKVDILIQGEKVDAFSAIVHRDKAYSYGVMMTKKLRSLIPRQQFEIPIQAAIGSRIIARENIRALRKDVLAKCYGGDITRKRKLLEKQKAGKKRMKMLGHVEVPQEAFIAALSTGEDSNDRDTKDKIRAAQKTEG.

The region spanning 14–195 is the tr-type G domain; sequence SVIRNFCIIA…QIVMDVPAPH (182 aa). GTP contacts are provided by residues 26-31 and 142-145; these read DHGKST and NKID. Residues 603–626 are disordered; sequence LSTGEDSNDRDTKDKIRAAQKTEG. The segment covering 609–626 has biased composition (basic and acidic residues); the sequence is SNDRDTKDKIRAAQKTEG.

The protein belongs to the TRAFAC class translation factor GTPase superfamily. Classic translation factor GTPase family. LepA subfamily.

It localises to the cell membrane. It catalyses the reaction GTP + H2O = GDP + phosphate + H(+). Required for accurate and efficient protein synthesis under certain stress conditions. May act as a fidelity factor of the translation reaction, by catalyzing a one-codon backward translocation of tRNAs on improperly translocated ribosomes. Back-translocation proceeds from a post-translocation (POST) complex to a pre-translocation (PRE) complex, thus giving elongation factor G a second chance to translocate the tRNAs correctly. Binds to ribosomes in a GTP-dependent manner. The polypeptide is Elongation factor 4 (Bifidobacterium longum subsp. infantis (strain ATCC 15697 / DSM 20088 / JCM 1222 / NCTC 11817 / S12)).